The chain runs to 317 residues: L-lactate dehydrogenase 1 (317 aa).

NAD(+) is bound by residues V17, D38, K43, Y69, and 83-84 (GA). Residues Q86 and R92 each coordinate substrate. NAD(+) contacts are provided by residues S105, 122–124 (ATN), and S147. Position 124–127 (124–127 (NPVD)) interacts with substrate. 152–155 (DSAR) is a substrate binding site. The Proton acceptor role is filled by H179. Residue Y223 is modified to Phosphotyrosine. T232 contributes to the substrate binding site.

The protein belongs to the LDH/MDH superfamily. LDH family. Homotetramer.

The protein resides in the cytoplasm. The enzyme catalyses (S)-lactate + NAD(+) = pyruvate + NADH + H(+). It participates in fermentation; pyruvate fermentation to lactate; (S)-lactate from pyruvate: step 1/1. Catalyzes the conversion of lactate to pyruvate (Potential). Appears to be the primary factor that allows S.aureus growth during nitrosative stress in both aerobically and anaerobically cultured cells. The protein is L-lactate dehydrogenase 1 of Staphylococcus aureus (strain USA300).